Here is a 538-residue protein sequence, read N- to C-terminus: (R)-citramalate synthase (538 aa).

The Pyruvate carboxyltransferase domain maps to 3–268 (IKVYDTTLRD…IPKENLKKLF (266 aa)).

Belongs to the alpha-IPM synthase/homocitrate synthase family.

It carries out the reaction pyruvate + acetyl-CoA + H2O = (3R)-citramalate + CoA + H(+). It functions in the pathway amino-acid biosynthesis; L-isoleucine biosynthesis; 2-oxobutanoate from pyruvate: step 1/3. Its function is as follows. Catalyzes the condensation of pyruvate and acetyl-coenzyme A to form (R)-citramalate. This chain is (R)-citramalate synthase, found in Thermotoga maritima (strain ATCC 43589 / DSM 3109 / JCM 10099 / NBRC 100826 / MSB8).